A 228-amino-acid chain; its full sequence is Response regulator MprA (228 aa).

One can recognise a Response regulatory domain in the interval 2 to 116; that stretch reads RILAVDDDRA…ELLARIRALL (115 aa). 4-aspartylphosphate is present on Asp-46. Positions 127 to 225 form a DNA-binding region, ompR/PhoB-type; that stretch reads SVAMSFSDLT…VRGVGYVLRE (99 aa).

Post-translationally, phosphorylated and dephosphorylated by MprB.

It is found in the cytoplasm. Functionally, member of the two-component regulatory system MprB/MprA which contributes to maintaining a balance among several systems involved in stress resistance and is required for establishment and maintenance of persistent infection in the host. Functions as a transcriptional regulator that recognizes a 19-bp nucleotide motif comprizing two loosely conserved 8-bp direct DNA-binding motif repeats separated by a 3-bp spacer region. This is Response regulator MprA (mprA) from Mycobacterium leprae (strain TN).